A 271-amino-acid polypeptide reads, in one-letter code: Neurexophilin-1 (271 aa).

Residues 1 to 21 (MQAACWYVLLLLQPTIYLVTC) form the signal peptide. An II region spans residues 22 to 97 (ANLTNGGKSE…WDWLRNSTDL (76 aa)). N-linked (GlcNAc...) asparagine glycans are attached at residues asparagine 23, asparagine 68, asparagine 93, asparagine 146, asparagine 156, and asparagine 162. Residues 98–176 (QEPRPRAKRR…LVPPTKIVEF (79 aa)) form an III region. Positions 177–185 (DLAQQTVID) are IV (linker domain). Residues 186–271 (AKDSKSFNCR…HSDTPYFPSG (86 aa)) are v (Cys-rich).

This sequence belongs to the neurexophilin family.

The protein localises to the secreted. Functionally, may be signaling molecules that resemble neuropeptides and that act by binding to alpha-neurexins and possibly other receptors. The chain is Neurexophilin-1 (NXPH1) from Pongo abelii (Sumatran orangutan).